The following is a 98-amino-acid chain: Large ribosomal subunit protein uL23 (98 aa).

This sequence belongs to the universal ribosomal protein uL23 family. In terms of assembly, part of the 50S ribosomal subunit. Contacts protein L29, and trigger factor when it is bound to the ribosome.

One of the early assembly proteins it binds 23S rRNA. One of the proteins that surrounds the polypeptide exit tunnel on the outside of the ribosome. Forms the main docking site for trigger factor binding to the ribosome. The polypeptide is Large ribosomal subunit protein uL23 (Rickettsia prowazekii (strain Madrid E)).